Reading from the N-terminus, the 1223-residue chain is Rho family-interacting cell polarization regulator 1 (1223 aa).

Position 22 is a phosphoserine (serine 22). The stretch at 83 to 112 (RGLTAYLEVHQQEQEKLQRQIKESKRNSRL) forms a coiled coil. Phosphoserine occurs at positions 345 and 347. Position 351 is a phosphothreonine (threonine 351). The tract at residues 371–411 (NGTAWSLSSESSDDSSSPQLSGTARHSTPKPLVQQPEPLPV) is disordered. Low complexity-rich tracts occupy residues 376-391 (SLSS…PQLS) and 399-411 (PKPL…PLPV). A phosphoserine mark is found at serine 451, serine 454, and serine 468. Low complexity-rich tracts occupy residues 566-586 (TTIG…GSVP) and 595-655 (TPSP…TSPT). 2 disordered regions span residues 566 to 771 (TTIG…QHSE) and 856 to 887 (FLND…LDSS). Over residues 656-665 (QEAKMSTHTT) the composition is skewed to polar residues. Over residues 673 to 688 (TTTSPISTTESPSPST) the composition is skewed to low complexity. Composition is skewed to polar residues over residues 693-703 (ISSSSAESTGP) and 725-741 (ASCT…SKPL). At serine 748 the chain carries Phosphoserine. A compositionally biased stretch (low complexity) spans 748 to 767 (SPEQIPKSPSSSPSSSAPEP). Residues 858–867 (NDDEDEDNDG) show a composition bias toward acidic residues. The span at 868–885 (PGDRHTSSPEVVAEDRLD) shows a compositional bias: basic and acidic residues. Phosphoserine is present on residues serine 874 and serine 875.

It belongs to the RIPOR family. Interacts (via N-terminus) with RHOA (GTP-bound form); this interaction links active RHOA to STK24 and STK26 kinases. Interacts with RHOB. Interacts with RHOC. Interacts (via C-terminus) with PDCD10; this interaction occurs in a Rho-independent manner. Interacts (via C-terminus) with STK24; this interaction occurs in a PDCD10-dependent and Rho-independent manner. Interacts (via C-terminus) with STK26; this interaction occurs in a PDCD10-dependent and Rho-independent manner. Interacts (via N-terminus) with 14-3-3 proteins; these interactions occur in a Rho-dependent manner. As to expression, expressed in the kidney exclusively by glomerular podocytes.

The protein resides in the cytoplasm. The protein localises to the golgi apparatus. Downstream effector protein for Rho-type small GTPases that plays a role in cell polarity and directional migration. Acts as an adapter protein, linking active Rho proteins to STK24 and STK26 kinases, and hence positively regulates Golgi reorientation in polarized cell migration upon Rho activation. Involved in the subcellular relocation of STK26 from the Golgi to cytoplasm punctae in a Rho- and PDCD10-dependent manner upon serum stimulation. The sequence is that of Rho family-interacting cell polarization regulator 1 from Mus musculus (Mouse).